A 672-amino-acid chain; its full sequence is DNA ligase (672 aa).

NAD(+)-binding positions include 37–41, 86–87, and E115; these read DAEYD and SL. The active-site N6-AMP-lysine intermediate is the K117. Residues R138, E172, K288, and K312 each coordinate NAD(+). Zn(2+)-binding residues include C406, C409, C424, and C429. Residues 590 to 672 enclose the BRCT domain; sequence DISSTFAGKT…LQEIQQSKQV (83 aa).

The protein belongs to the NAD-dependent DNA ligase family. LigA subfamily. The cofactor is Mg(2+). Requires Mn(2+) as cofactor.

The catalysed reaction is NAD(+) + (deoxyribonucleotide)n-3'-hydroxyl + 5'-phospho-(deoxyribonucleotide)m = (deoxyribonucleotide)n+m + AMP + beta-nicotinamide D-nucleotide.. Functionally, DNA ligase that catalyzes the formation of phosphodiester linkages between 5'-phosphoryl and 3'-hydroxyl groups in double-stranded DNA using NAD as a coenzyme and as the energy source for the reaction. It is essential for DNA replication and repair of damaged DNA. In Anoxybacillus flavithermus (strain DSM 21510 / WK1), this protein is DNA ligase.